The chain runs to 500 residues: Protein nucleotidyltransferase YdiU (500 aa).

Residues Gly96, Gly98, Arg99, Lys119, Asp131, Gly132, Arg182, and Arg189 each contribute to the ATP site. The Proton acceptor role is filled by Asp258. 2 residues coordinate Mg(2+): Asn259 and Asp268. Asp268 lines the ATP pocket.

The protein belongs to the SELO family. The cofactor is Mg(2+). Mn(2+) serves as cofactor.

It carries out the reaction L-seryl-[protein] + ATP = 3-O-(5'-adenylyl)-L-seryl-[protein] + diphosphate. The enzyme catalyses L-threonyl-[protein] + ATP = 3-O-(5'-adenylyl)-L-threonyl-[protein] + diphosphate. The catalysed reaction is L-tyrosyl-[protein] + ATP = O-(5'-adenylyl)-L-tyrosyl-[protein] + diphosphate. It catalyses the reaction L-histidyl-[protein] + UTP = N(tele)-(5'-uridylyl)-L-histidyl-[protein] + diphosphate. It carries out the reaction L-seryl-[protein] + UTP = O-(5'-uridylyl)-L-seryl-[protein] + diphosphate. The enzyme catalyses L-tyrosyl-[protein] + UTP = O-(5'-uridylyl)-L-tyrosyl-[protein] + diphosphate. Its function is as follows. Nucleotidyltransferase involved in the post-translational modification of proteins. It can catalyze the addition of adenosine monophosphate (AMP) or uridine monophosphate (UMP) to a protein, resulting in modifications known as AMPylation and UMPylation. This chain is Protein nucleotidyltransferase YdiU, found in Rhizobium leguminosarum bv. trifolii (strain WSM2304).